We begin with the raw amino-acid sequence, 294 residues long: 4-hydroxybenzoate octaprenyltransferase (294 aa).

A run of 8 helical transmembrane segments spans residues 24–44 (IGIL…ADGF), 47–67 (LHLI…GCVI), 99–119 (LLAA…DPLV), 139–159 (FLAI…PMGF), 164–184 (GEVP…AVAY), 213–233 (VAAV…VGIA), 238–258 (PWFF…YTLI), and 274–294 (NWVG…FPAA).

It belongs to the UbiA prenyltransferase family. Requires Mg(2+) as cofactor.

The protein localises to the cell inner membrane. The enzyme catalyses all-trans-octaprenyl diphosphate + 4-hydroxybenzoate = 4-hydroxy-3-(all-trans-octaprenyl)benzoate + diphosphate. Its pathway is cofactor biosynthesis; ubiquinone biosynthesis. Its function is as follows. Catalyzes the prenylation of para-hydroxybenzoate (PHB) with an all-trans polyprenyl group. Mediates the second step in the final reaction sequence of ubiquinone-8 (UQ-8) biosynthesis, which is the condensation of the polyisoprenoid side chain with PHB, generating the first membrane-bound Q intermediate 3-octaprenyl-4-hydroxybenzoate. The protein is 4-hydroxybenzoate octaprenyltransferase of Aromatoleum aromaticum (strain DSM 19018 / LMG 30748 / EbN1) (Azoarcus sp. (strain EbN1)).